The following is a 79-amino-acid chain: ATP synthase subunit c (79 aa).

Helical transmembrane passes span 11–31 and 53–73; these read IAVA…IGIL and FFVV…LGLY.

This sequence belongs to the ATPase C chain family. In terms of assembly, F-type ATPases have 2 components, F(1) - the catalytic core - and F(0) - the membrane proton channel. F(1) has five subunits: alpha(3), beta(3), gamma(1), delta(1), epsilon(1). F(0) has three main subunits: a(1), b(2) and c(10-14). The alpha and beta chains form an alternating ring which encloses part of the gamma chain. F(1) is attached to F(0) by a central stalk formed by the gamma and epsilon chains, while a peripheral stalk is formed by the delta and b chains.

The protein resides in the cell membrane. Functionally, f(1)F(0) ATP synthase produces ATP from ADP in the presence of a proton or sodium gradient. F-type ATPases consist of two structural domains, F(1) containing the extramembraneous catalytic core and F(0) containing the membrane proton channel, linked together by a central stalk and a peripheral stalk. During catalysis, ATP synthesis in the catalytic domain of F(1) is coupled via a rotary mechanism of the central stalk subunits to proton translocation. Its function is as follows. Key component of the F(0) channel; it plays a direct role in translocation across the membrane. A homomeric c-ring of between 10-14 subunits forms the central stalk rotor element with the F(1) delta and epsilon subunits. The polypeptide is ATP synthase subunit c (Buchnera aphidicola subsp. Acyrthosiphon pisum (strain 5A)).